Reading from the N-terminus, the 314-residue chain is Homeobox-leucine zipper protein HAT7 (314 aa).

The disordered stretch occupies residues 77–109; that stretch reads HHHLTQKSPTTTNNMNDQDQVGEEDNLSDDGSH. Polar residues predominate over residues 82–95; sequence QKSPTTTNNMNDQD. A DNA-binding region (homeobox) is located at residues 112 to 171; it reads LGEKKKRLNLEQVRALEKSFELGNKLEPERKMQLAKALGLQPRQIAIWFQNRRARWKTKQ. The tract at residues 172 to 207 is leucine-zipper; it reads LERDYDSLKKQFDVLKSDNDSLLAHNKKLHAELVAL.

Belongs to the HD-ZIP homeobox family. Class I subfamily. As to expression, expressed predominantly in flowers, and in the cortex of the root and the stem.

Its subcellular location is the nucleus. In terms of biological role, probable transcription factor. The sequence is that of Homeobox-leucine zipper protein HAT7 (HAT7) from Arabidopsis thaliana (Mouse-ear cress).